A 405-amino-acid chain; its full sequence is Glutamate-pyruvate aminotransferase AlaA (405 aa).

The L-alanine site is built by G41 and N179. K240 is modified (N6-(pyridoxal phosphate)lysine). R378 contacts L-alanine.

Belongs to the class-I pyridoxal-phosphate-dependent aminotransferase family. In terms of assembly, homodimer. The cofactor is pyridoxal 5'-phosphate.

The protein resides in the cytoplasm. The enzyme catalyses L-alanine + 2-oxoglutarate = pyruvate + L-glutamate. Its pathway is amino-acid biosynthesis; L-alanine biosynthesis. Involved in the biosynthesis of alanine. Catalyzes the transamination of pyruvate by glutamate, leading to the formation of L-alanine and 2-oxoglutarate. Is also able to catalyze the reverse reaction. In Escherichia coli (strain K12), this protein is Glutamate-pyruvate aminotransferase AlaA.